Consider the following 232-residue polypeptide: Ubiquinone biosynthesis O-methyltransferase (232 aa).

Arg36, Gly55, Asp76, and Met120 together coordinate S-adenosyl-L-methionine.

It belongs to the methyltransferase superfamily. UbiG/COQ3 family.

The enzyme catalyses a 3-demethylubiquinol + S-adenosyl-L-methionine = a ubiquinol + S-adenosyl-L-homocysteine + H(+). The catalysed reaction is a 3-(all-trans-polyprenyl)benzene-1,2-diol + S-adenosyl-L-methionine = a 2-methoxy-6-(all-trans-polyprenyl)phenol + S-adenosyl-L-homocysteine + H(+). Its pathway is cofactor biosynthesis; ubiquinone biosynthesis. In terms of biological role, O-methyltransferase that catalyzes the 2 O-methylation steps in the ubiquinone biosynthetic pathway. The sequence is that of Ubiquinone biosynthesis O-methyltransferase from Paraburkholderia xenovorans (strain LB400).